Reading from the N-terminus, the 995-residue chain is S1 RNA-binding domain-containing protein 1 (995 aa).

The tract at residues 23 to 81 (SFSELSSASEEDDKEDSAWEPQKKVPRSRKQPPPKESKPKRMPRVKKNAPQISDGSEVV) is disordered. Glycyl lysine isopeptide (Lys-Gly) (interchain with G-Cter in SUMO2) cross-links involve residues K84 and K134. Residues 120 to 165 (CAAQPHTVRRTKKLKVEEETSKASNLEGESNSSETPSTSTVWGGTC) form a disordered region. Residues 146 to 159 (EGESNSSETPSTST) are compositionally biased toward low complexity. Residues K166, K167, and K183 each participate in a glycyl lysine isopeptide (Lys-Gly) (interchain with G-Cter in SUMO2) cross-link. K185 participates in a covalent cross-link: Glycyl lysine isopeptide (Lys-Gly) (interchain with G-Cter in SUMO1); alternate. K185 is covalently cross-linked (Glycyl lysine isopeptide (Lys-Gly) (interchain with G-Cter in SUMO2); alternate). Residues 258 to 288 (ADSLREVQQTLEELRAVAKKVHSTIQKIKKE) are a coiled coil. A Phosphoserine modification is found at S861. The region spanning 919 to 992 (GTVLTGKVEN…PRSRITLDLI (74 aa)) is the S1 motif domain. K955 is covalently cross-linked (Glycyl lysine isopeptide (Lys-Gly) (interchain with G-Cter in SUMO2)). S964 carries the phosphoserine modification.

This Homo sapiens (Human) protein is S1 RNA-binding domain-containing protein 1 (SRBD1).